The sequence spans 100 residues: NADH-quinone oxidoreductase subunit K (100 aa).

A run of 3 helical transmembrane segments spans residues 2 to 22 (ISLNHYLLLCVILFCIGLFGI), 28 to 48 (ILMLFFSTEILLNAINIGFVA), and 63 to 83 (LFIIAIAASEIAVGLGLVVIW).

This sequence belongs to the complex I subunit 4L family. As to quaternary structure, NDH-1 is composed of 14 different subunits. Subunits NuoA, H, J, K, L, M, N constitute the membrane sector of the complex.

The protein localises to the cell inner membrane. The enzyme catalyses a quinone + NADH + 5 H(+)(in) = a quinol + NAD(+) + 4 H(+)(out). NDH-1 shuttles electrons from NADH, via FMN and iron-sulfur (Fe-S) centers, to quinones in the respiratory chain. The immediate electron acceptor for the enzyme in this species is believed to be ubiquinone. Couples the redox reaction to proton translocation (for every two electrons transferred, four hydrogen ions are translocated across the cytoplasmic membrane), and thus conserves the redox energy in a proton gradient. The sequence is that of NADH-quinone oxidoreductase subunit K from Helicobacter hepaticus (strain ATCC 51449 / 3B1).